The following is a 424-amino-acid chain: Neurotensin receptor type 1 (424 aa).

At 1 to 67 (MHLNSSVQQG…TDIYSKVLVT (67 aa)) the chain is on the extracellular side. Residues Asn4, Asn38, and Asn42 are each glycosylated (N-linked (GlcNAc...) asparagine). Residues 68–88 (AVYLALFVVGTVGNSVTAFTL) traverse the membrane as a helical segment. The Cytoplasmic segment spans residues 89 to 102 (ARKKSLQSLQSTVH). Residues 103–122 (YHLGSLALSDLLILLLAMPV) traverse the membrane as a helical segment. Over 123-142 (ELYNFIWVHHPWAFGDAGCR) the chain is Extracellular. Residues Cys141 and Cys224 are joined by a disulfide bond. A helical transmembrane segment spans residues 143 to 164 (GYYFLRDACTYATALNVASLSV). Residues 165-184 (ERYLAICHPFKAKTLMSRSR) are Cytoplasmic-facing. Residues 185-205 (TKKFISAIWLASALLAVPMLF) form a helical membrane-spanning segment. The Extracellular segment spans residues 206–234 (TMGLQNRSADGQHPGGLVCTPTVDTATVK). N-linked (GlcNAc...) asparagine glycosylation occurs at Asn211. A helical transmembrane segment spans residues 235-259 (VVIQVNTFMSFLFPMLIISILNTVI). Over 260 to 308 (ANKLTVMVHQAAEQGRGVCTVGTHNSLEHSTFNMSIEPGRVQALRHGVL) the chain is Cytoplasmic. A helical membrane pass occupies residues 309 to 330 (VLRAVVIAFVVCWLPYHVRRLM). Residues 326–349 (VRRLMFCYISDEQWTTFLFDFYHY) are neurotensin binding. At 331-348 (FCYISDEQWTTFLFDFYH) the chain is on the extracellular side. Residues 349 to 369 (YFYMLTNALFYVSSAINPILY) traverse the membrane as a helical segment. Topologically, residues 370-424 (NLVSANFRQVFLSTLACLCPGWRRRRKKRPTFSRKPNSMSSNHAFSTSATRETLY) are cytoplasmic. S-palmitoyl cysteine attachment occurs at residues Cys386 and Cys388. The disordered stretch occupies residues 398–424 (RPTFSRKPNSMSSNHAFSTSATRETLY). The span at 403 to 424 (RKPNSMSSNHAFSTSATRETLY) shows a compositional bias: polar residues.

Belongs to the G-protein coupled receptor 1 family. Neurotensin receptor subfamily. NTSR1 sub-subfamily. As to quaternary structure, interacts (palmitoylated form) with GNA11. N-glycosylated. In terms of processing, palmitoylated; this is required for normal localization at membrane rafts and normal GNA11-mediated activation of down-stream signaling cascades. The palmitoylation level increases in response to neurotensin treatment.

The protein resides in the cell membrane. Its subcellular location is the membrane raft. In terms of biological role, G-protein coupled receptor for the tridecapeptide neurotensin (NTS). Signaling is effected via G proteins that activate a phosphatidylinositol-calcium second messenger system. Signaling leads to the activation of downstream MAP kinases and protects cells against apoptosis. This is Neurotensin receptor type 1 (Ntsr1) from Mus musculus (Mouse).